A 319-amino-acid chain; its full sequence is 8-methylmenaquinol:fumarate reductase iron-sulfur subunit (319 aa).

Residues 1 to 96 (MKFIIDRFDG…TFRISPLGNH (96 aa)) enclose the 2Fe-2S ferredoxin-type domain. Residues cysteine 51, cysteine 56, cysteine 59, and cysteine 71 each contribute to the [2Fe-2S] cluster site. 4Fe-4S ferredoxin-type domains are found at residues 139–168 (FDRI…QSDY) and 193–224 (VKPA…AEDI). Positions 148, 151, 154, 158, 204, 207, 210, and 214 each coordinate [4Fe-4S] cluster.

It belongs to the succinate dehydrogenase/fumarate reductase iron-sulfur protein family. In terms of assembly, the MFR complex is composed of three subunits: a flavoprotein (SdhA), an iron-sulfur protein (SdhB), and one hydrophobic anchor protein (SdhE). [2Fe-2S] cluster is required as a cofactor. The cofactor is [4Fe-4S] cluster.

Its subcellular location is the periplasm. It is found in the cell membrane. It carries out the reaction 8-methylmenaquinone-6 + succinate = 8-methylmenaquinol-6 + fumarate. Iron-sulfur subunit of 8-methylmenaquinol:fumarate reductase (MFR), that catalyzes the reduction of fumarate using 8-methylmenaquinol-6 as electron donor. The complex shows no succinate oxidation activity. Is involved in anaerobic metabolism. In Wolinella succinogenes (strain ATCC 29543 / DSM 1740 / CCUG 13145 / JCM 31913 / LMG 7466 / NCTC 11488 / FDC 602W) (Vibrio succinogenes), this protein is 8-methylmenaquinol:fumarate reductase iron-sulfur subunit.